The sequence spans 286 residues: Bifunctional protein FolD (286 aa).

Residues 165–167 (GRS), Ser190, and Val231 contribute to the NADP(+) site.

Belongs to the tetrahydrofolate dehydrogenase/cyclohydrolase family. As to quaternary structure, homodimer.

It catalyses the reaction (6R)-5,10-methylene-5,6,7,8-tetrahydrofolate + NADP(+) = (6R)-5,10-methenyltetrahydrofolate + NADPH. The enzyme catalyses (6R)-5,10-methenyltetrahydrofolate + H2O = (6R)-10-formyltetrahydrofolate + H(+). The protein operates within one-carbon metabolism; tetrahydrofolate interconversion. Catalyzes the oxidation of 5,10-methylenetetrahydrofolate to 5,10-methenyltetrahydrofolate and then the hydrolysis of 5,10-methenyltetrahydrofolate to 10-formyltetrahydrofolate. This is Bifunctional protein FolD from Bacillus cereus (strain B4264).